We begin with the raw amino-acid sequence, 397 residues long: Acetate kinase (397 aa).

Asn8 serves as a coordination point for Mg(2+). Lys15 contributes to the ATP binding site. Arg90 is a substrate binding site. Residue Asp147 is the Proton donor/acceptor of the active site. His207–Gly211 lines the ATP pocket. Position 382 (Glu382) interacts with Mg(2+).

The protein belongs to the acetokinase family. As to quaternary structure, homodimer. It depends on Mg(2+) as a cofactor. Mn(2+) is required as a cofactor.

Its subcellular location is the cytoplasm. It catalyses the reaction acetate + ATP = acetyl phosphate + ADP. It participates in metabolic intermediate biosynthesis; acetyl-CoA biosynthesis; acetyl-CoA from acetate: step 1/2. Functionally, catalyzes the formation of acetyl phosphate from acetate and ATP. Can also catalyze the reverse reaction. The polypeptide is Acetate kinase (Lactiplantibacillus plantarum (strain ATCC BAA-793 / NCIMB 8826 / WCFS1) (Lactobacillus plantarum)).